A 562-amino-acid chain; its full sequence is Oligo-1,6-glucosidase (562 aa).

Ca(2+)-binding residues include aspartate 21, asparagine 23, aspartate 25, and aspartate 29. The Nucleophile role is filled by aspartate 199. Glutamate 256 functions as the Proton donor in the catalytic mechanism.

It belongs to the glycosyl hydrolase 13 family.

The protein localises to the cytoplasm. The catalysed reaction is Hydrolysis of (1-&gt;6)-alpha-D-glucosidic linkages in some oligosaccharides produced from starch and glycogen by alpha-amylase, and in isomaltose.. The sequence is that of Oligo-1,6-glucosidase (malL) from Parageobacillus thermoglucosidasius (Geobacillus thermoglucosidasius).